The sequence spans 586 residues: RNA-directed RNA polymerase subunit beta (586 aa).

The 133-residue stretch at 259–391 folds into the RdRp catalytic domain; that stretch reads VRAYSGSCSN…TNEKKTFFDG (133 aa). D274, D359, and D360 together coordinate Mg(2+).

As to quaternary structure, homodimer; the replicase complex can dimerize. Part of the viral RNA-dependent RNA polymerase complex, the other subunits are the host ribosomal protein S1, EF-Tu and EF-Ts. S1 is needed for the initiation of genomic RNA (+)-strand replication. The cofactor is Mg(2+).

It carries out the reaction RNA(n) + a ribonucleoside 5'-triphosphate = RNA(n+1) + diphosphate. Functionally, this is the catalytic subunit of the viral RNA-dependent RNA polymerase complex. This complex is involved in viral RNA replication that produces (+)-stranded genomes via a complementary, (-)-stranded intermediate. Binds RNA cooperatively with the host ribosomal protein S1. This Escherichia coli protein is RNA-directed RNA polymerase subunit beta.